The following is a 189-amino-acid chain: Thermostable direct hemolysin (189 aa).

An N-terminal signal peptide occupies residues 1-24 (MKYQYFAKKSFLFISMLAAFKTFA). Cysteines 175 and 185 form a disulfide.

The protein belongs to the TDH hemolysin family. Homodimer.

Bacterial hemolysins are exotoxins that attack blood cell membranes and cause cell rupture by mechanisms not clearly defined. The protein is Thermostable direct hemolysin (tdh) of Vibrio mimicus.